Reading from the N-terminus, the 388-residue chain is Probable ubiquitin-conjugating enzyme E2 L709 (388 aa).

The 160-residue stretch at 3–162 (NVHKRVIKDI…GNDLMVQKLF (160 aa)) folds into the UBC core domain. The active-site Glycyl thioester intermediate is the Cys95. Residues 195 to 388 (VEEKSAKTSK…SSKSSKTGKK (194 aa)) are disordered. Composition is skewed to acidic residues over residues 221–238 (SEEE…DSES) and 246–297 (DVVD…ESEE). The span at 310 to 388 (KTTTKSSSTK…SSKSSKTGKK (79 aa)) shows a compositional bias: low complexity.

The protein belongs to the ubiquitin-conjugating enzyme family.

It carries out the reaction S-ubiquitinyl-[E1 ubiquitin-activating enzyme]-L-cysteine + [E2 ubiquitin-conjugating enzyme]-L-cysteine = [E1 ubiquitin-activating enzyme]-L-cysteine + S-ubiquitinyl-[E2 ubiquitin-conjugating enzyme]-L-cysteine.. The protein operates within protein modification; protein ubiquitination. Its function is as follows. Catalyzes the covalent attachment of ubiquitin to other proteins. This is Probable ubiquitin-conjugating enzyme E2 L709 from Acanthamoeba polyphaga (Amoeba).